The primary structure comprises 364 residues: GTPase Obg (364 aa).

The Obg domain maps to 1 to 159; it reads MKFLDEAKVY…KTIWLHLKLI (159 aa). The OBG-type G domain occupies 160–327; that stretch reads ADAGLVGLPN…VLRALRDIIV (168 aa). Residues 166-173, 191-195, 212-215, 279-282, and 308-310 contribute to the GTP site; these read GLPNAGKS, FTTLH, DIPG, SQID, and SAV. Mg(2+) contacts are provided by serine 173 and threonine 193. The tract at residues 333–364 is disordered; it reads EKPAKVPKLRHRDMVVTDEGEDKGGDEGDDQP.

This sequence belongs to the TRAFAC class OBG-HflX-like GTPase superfamily. OBG GTPase family. Monomer. Mg(2+) serves as cofactor.

It is found in the cytoplasm. In terms of biological role, an essential GTPase which binds GTP, GDP and possibly (p)ppGpp with moderate affinity, with high nucleotide exchange rates and a fairly low GTP hydrolysis rate. Plays a role in control of the cell cycle, stress response, ribosome biogenesis and in those bacteria that undergo differentiation, in morphogenesis control. The protein is GTPase Obg of Rhizobium johnstonii (strain DSM 114642 / LMG 32736 / 3841) (Rhizobium leguminosarum bv. viciae).